Reading from the N-terminus, the 222-residue chain is UPF0758 protein CT0611 (222 aa).

The MPN domain maps to 100–222 (KVKGARDVFE…WFSFRDHALL (123 aa)). Zn(2+) contacts are provided by His171, His173, and Asp184. Residues 171–184 (HNHPSGDVQPSNAD) carry the JAMM motif motif.

The protein belongs to the UPF0758 family.

In Chlorobaculum tepidum (strain ATCC 49652 / DSM 12025 / NBRC 103806 / TLS) (Chlorobium tepidum), this protein is UPF0758 protein CT0611.